The sequence spans 626 residues: Chaperone protein HtpG (626 aa).

Residues 1–341 (MAKREFKAES…SEDLSLNISR (341 aa)) form an a; substrate-binding region. Positions 342–552 (EMLQHDRQLK…DGEVTIEMEK (211 aa)) are b. The c stretch occupies residues 553–626 (ILNAMPDNQH…FTNDICKVMA (74 aa)).

Belongs to the heat shock protein 90 family. Homodimer.

The protein localises to the cytoplasm. Its function is as follows. Molecular chaperone. Has ATPase activity. The sequence is that of Chaperone protein HtpG from Bacillus licheniformis (strain ATCC 14580 / DSM 13 / JCM 2505 / CCUG 7422 / NBRC 12200 / NCIMB 9375 / NCTC 10341 / NRRL NRS-1264 / Gibson 46).